We begin with the raw amino-acid sequence, 36 residues long: Fructose-1,6-/sedoheptulose-1,7-bisphosphate aldolase (36 aa).

This Nitrobacter vulgaris protein is Fructose-1,6-/sedoheptulose-1,7-bisphosphate aldolase (cbbA).